A 62-amino-acid polypeptide reads, in one-letter code: Large ribosomal subunit protein bL32 (62 aa).

Positions 28–62 (SIEPTTGEVHRRHHISPDGFYRGRQVIKAKEQDEE) are disordered.

The protein belongs to the bacterial ribosomal protein bL32 family.

The protein is Large ribosomal subunit protein bL32 of Thioalkalivibrio sulfidiphilus (strain HL-EbGR7).